A 525-amino-acid chain; its full sequence is MFEVTVSKRLLKSGIIVSAMTLISRVLGLVRDVVVANLMGAGASADVFFFANRIPNFLRRLFAEGAFSQAFVPVLTEYHASGDINKTRDLIARASGTLGVLVTIVTLIGVLGSGAVTALFGAGWFLDWLNGGPAAGKFELASLLLKITFPYLWFITFVALSGAILNTLGKFAVSSFTPVFLNVMMILCAWYLSPNLEQPEVGLAIGVFLGGLVQFLFQLPFLIKAGVLVRPKWGWKDPGVVKIRTLMIPALFGVSVSQINLLFDSFVASFLQTGSISWLYYSDRLLEFPLGLFGIAIATVILPALSRKHVDAHSDGFAHTMDWGIRMVTFLGIPAMLGLMVLAKPMLMVLFMRGEFTPSDVEQASYSLLAYSSGLLSFMLIKVLAPGYYSRQDTKTPVRYGIIAMVSNIVLNAIFAWFYGYVGLAVATSMSAFLNMALLYRGLHLQGVYHLTRKTVWFVARLAMAGAVMTGALLWQLDTMATWLSWGISQRALTLTGLIGLGVASYLAILLLLGVRLKDLKAATE.

Transmembrane regions (helical) follow at residues 10-30, 32-52, 100-120, 140-160, 171-191, 203-223, 247-267, 285-305, 330-350, 368-388, 402-422, 423-443, 455-475, and 495-515; these read LLKS…LGLV, DVVV…FFAN, VLVT…TALF, LASL…FVAL, FAVS…CAWY, LAIG…PFLI, MIPA…DSFV, LLEF…LPAL, FLGI…LMVL, LLAY…APGY, IIAM…YGYV, GLAV…YRGL, TVWF…ALLW, and LTGL…LLGV.

This sequence belongs to the MurJ/MviN family.

It localises to the cell inner membrane. It functions in the pathway cell wall biogenesis; peptidoglycan biosynthesis. Involved in peptidoglycan biosynthesis. Transports lipid-linked peptidoglycan precursors from the inner to the outer leaflet of the cytoplasmic membrane. This is Probable lipid II flippase MurJ from Vibrio cholerae serotype O1 (strain ATCC 39315 / El Tor Inaba N16961).